The chain runs to 238 residues: Ribosomal RNA small subunit methyltransferase G (238 aa).

S-adenosyl-L-methionine is bound by residues glycine 79, phenylalanine 84, 102-104, 130-131, and arginine 149; these read EAT and IE.

The protein belongs to the methyltransferase superfamily. RNA methyltransferase RsmG family.

It is found in the cytoplasm. In terms of biological role, specifically methylates the N7 position of a guanine in 16S rRNA. The polypeptide is Ribosomal RNA small subunit methyltransferase G (Chloroflexus aggregans (strain MD-66 / DSM 9485)).